Reading from the N-terminus, the 207-residue chain is MSSRSRSKTRESRALGIALTPKAARYMEKRPYAPGEHGRTKRKADSDYAVRLREKQRLRAQYGILEKQLRIAFEEARRTQGLTGENLVEILEMRLDALVLRAGFARTISQARQFVVHRHILVDGKLVDRPSFRVKPGQTIGVKARSEGTEPFQVAAAGGHVDVLPKTPAYLSVELDKLQARLERRPKRAEVPVTCEVQLVVEYYAAR.

The segment at 20–45 is disordered; sequence TPKAARYMEKRPYAPGEHGRTKRKAD. In terms of domain architecture, S4 RNA-binding spans 93–158; sequence MRLDALVLRA…TEPFQVAAAG (66 aa).

It belongs to the universal ribosomal protein uS4 family. In terms of assembly, part of the 30S ribosomal subunit. Contacts protein S5. The interaction surface between S4 and S5 is involved in control of translational fidelity.

Functionally, one of the primary rRNA binding proteins, it binds directly to 16S rRNA where it nucleates assembly of the body of the 30S subunit. Its function is as follows. With S5 and S12 plays an important role in translational accuracy. The polypeptide is Small ribosomal subunit protein uS4 (Leifsonia xyli subsp. xyli (strain CTCB07)).